Consider the following 860-residue polypeptide: Leucine--tRNA ligase (860 aa).

The short motif at 42–52 (PYPSGRLHMGH) is the 'HIGH' region element. Positions 619–623 (KMSKS) match the 'KMSKS' region motif. K622 is an ATP binding site.

This sequence belongs to the class-I aminoacyl-tRNA synthetase family.

The protein resides in the cytoplasm. It catalyses the reaction tRNA(Leu) + L-leucine + ATP = L-leucyl-tRNA(Leu) + AMP + diphosphate. This Salmonella choleraesuis (strain SC-B67) protein is Leucine--tRNA ligase.